Consider the following 192-residue polypeptide: Cytidylate kinase (192 aa).

Residue 7–15 coordinates ATP; the sequence is GPPGAGKST.

This sequence belongs to the cytidylate kinase family. Type 2 subfamily.

It localises to the cytoplasm. The enzyme catalyses CMP + ATP = CDP + ADP. It carries out the reaction dCMP + ATP = dCDP + ADP. This chain is Cytidylate kinase, found in Haloquadratum walsbyi (strain DSM 16790 / HBSQ001).